The primary structure comprises 138 residues: Basic phospholipase A2 canebraxin B (138 aa).

Positions 1–16 (MRALWIVAVLLVAVEG) are cleaved as a signal peptide. 7 cysteine pairs are disulfide-bonded: C42–C131, C44–C60, C59–C111, C65–C138, C66–C104, C73–C97, and C91–C102. Ca(2+) is bound by residues Y43, G45, and G47. The active site involves H63. D64 lines the Ca(2+) pocket. Residue D105 is part of the active site.

The protein belongs to the phospholipase A2 family. Group II subfamily. As to quaternary structure, heterodimer of an acidic subunit and a basic chain. The acidic subunit is non-toxic, without enzymatic activity and comprises 3 peptides that are cross-linked by 7 disulfide bridges. The basic subunit is toxic, has phospholipase A2 activity and is composed of a single chain. Ca(2+) serves as cofactor. Expressed by the venom gland.

It is found in the secreted. The enzyme catalyses a 1,2-diacyl-sn-glycero-3-phosphocholine + H2O = a 1-acyl-sn-glycero-3-phosphocholine + a fatty acid + H(+). Its function is as follows. Snake venom phospholipase A2 (PLA2) that shows presynaptic neurotoxicity. PLA2 catalyzes the calcium-dependent hydrolysis of the 2-acyl groups in 3-sn-phosphoglycerides. The chain is Basic phospholipase A2 canebraxin B from Crotalus horridus (Timber rattlesnake).